Consider the following 839-residue polypeptide: Oligopeptide transporter phomP2 (839 aa).

Residues 1–58 (MEADPKVPFTDEMNIQDEHNWESGSWSSSRRSNDSNVTLLSRRSSVEQHEDERQKDSD) form a disordered region. Residues 23-36 (SGSWSSSRRSNDSN) are compositionally biased toward low complexity. N-linked (GlcNAc...) asparagine glycosylation is found at Asn33 and Asn36. Positions 44 to 58 (SSVEQHEDERQKDSD) are enriched in basic and acidic residues. 6 consecutive transmembrane segments (helical) span residues 105 to 125 (VWLL…VYYF), 177 to 197 (ALVV…GPLS), 210 to 230 (PWAI…VGLY), 268 to 288 (VFMA…FVFP), 315 to 335 (GFGL…SPLF), and 345 to 365 (FVGA…SDAL). 2 N-linked (GlcNAc...) asparagine glycosylation sites follow: Asn386 and Asn398. The next 4 membrane-spanning stretches (helical) occupy residues 415 to 435 (AMHF…AVLF), 478 to 498 (AWYA…LYAG), 505 to 525 (WGLQ…GMLF), and 585 to 605 (WELL…NWAV). Over residues 629–646 (QGLGLGQGGGGGGGGGGQ) the composition is skewed to gly residues. The interval 629-654 (QGLGLGQGGGGGGGGGGQQQRAAGAH) is disordered. The next 3 helical transmembrane spans lie at 665 to 685 (NFFS…FGGG), 697 to 717 (WLLP…WLIH), and 728 to 748 (WPLH…FPTT). Asn749 is a glycosylation site (N-linked (GlcNAc...) asparagine). The chain crosses the membrane as a helical span at residues 781–801 (AGLDCGAQLVQMVLGVAFLVF).

Belongs to the oligopeptide OPT transporter family.

Its subcellular location is the membrane. In terms of biological role, oligopeptide transporter; part of the gene cluster that mediates the biosynthesis of the phomopsins, a group of hexapeptide mycotoxins which infects lupins and causes lupinosis disease in livestock. This Diaporthe leptostromiformis (Lupinosis disease fungus) protein is Oligopeptide transporter phomP2.